A 90-amino-acid polypeptide reads, in one-letter code: Probable Fe(2+)-trafficking protein (90 aa).

It belongs to the Fe(2+)-trafficking protein family.

Could be a mediator in iron transactions between iron acquisition and iron-requiring processes, such as synthesis and/or repair of Fe-S clusters in biosynthetic enzymes. This Xylella fastidiosa (strain 9a5c) protein is Probable Fe(2+)-trafficking protein.